We begin with the raw amino-acid sequence, 258 residues long: Small ribosomal subunit protein eS1 (258 aa).

The interval 235 to 258 is disordered; it reads VASSGDAGSAVRRDGYEPPVQESV.

Belongs to the eukaryotic ribosomal protein eS1 family. In terms of assembly, component of the small ribosomal subunit. Mature ribosomes consist of a small (40S) and a large (60S) subunit. The 40S subunit contains about 33 different proteins and 1 molecule of RNA (18S). The 60S subunit contains about 49 different proteins and 3 molecules of RNA (28S, 5.8S and 5S).

It is found in the cytoplasm. The protein is Small ribosomal subunit protein eS1 of Trichoplax adhaerens (Trichoplax reptans).